Consider the following 156-residue polypeptide: dCTP deaminase (156 aa).

Residues 79–84 (RSSLAR), Asp95, Gln124, and Tyr138 each bind dCTP.

The protein belongs to the dCTP deaminase family. In terms of assembly, homotrimer.

It catalyses the reaction dCTP + H2O + H(+) = dUTP + NH4(+). The protein operates within pyrimidine metabolism; dUMP biosynthesis; dUMP from dCTP (dUTP route): step 1/2. Catalyzes the deamination of dCTP to dUTP. In Pyrococcus horikoshii (strain ATCC 700860 / DSM 12428 / JCM 9974 / NBRC 100139 / OT-3), this protein is dCTP deaminase.